Reading from the N-terminus, the 1669-residue chain is Collagen alpha-3(IV) chain (1669 aa).

Positions 1–28 (MHSKTAPRFLVFLLLTLLLLLAASPVAS) are cleaved as a signal peptide. The 7S domain stretch occupies residues 29–42 (KGCVCKGKGQCLCA). A triple-helical region region spans residues 43–1436 (GTKGEKGEKG…KGNPGDRGTP (1394 aa)). Disordered regions lie at residues 44 to 473 (TKGE…EPGS) and 500 to 1439 (PGGR…PATG). Low complexity predominate over residues 54–68 (PGSPGFPGQKGFPGP). Residues 105-114 (PGLPGLPGHP) are compositionally biased toward pro residues. Asparagine 126 is a glycosylation site (N-linked (GlcNAc...) asparagine). The segment covering 188–200 (PGFPGPAGPPGPP) has biased composition (pro residues). Over residues 202–211 (FFGLPGAMGP) the composition is skewed to low complexity. Residue asparagine 253 is glycosylated (N-linked (GlcNAc...) asparagine). The span at 255 to 269 (SDFKGEKGDEGERGE) shows a compositional bias: basic and acidic residues. Composition is skewed to low complexity over residues 279-290 (PGDSYGSEKGAP) and 382-393 (SPGLSRPGLRGP). A compositionally biased stretch (pro residues) spans 416–437 (PPGPLGCPGSPGPPGPPGPPGC). The span at 551–560 (NPGDPGLRGL) shows a compositional bias: low complexity. Pro residues-rich tracts occupy residues 596–617 (PPGPPGFPGPPGPAGPAGPPGY) and 654–665 (LGPPGPPGPPGQ). Low complexity predominate over residues 666-684 (AGPRGLPGLPGPVGKCDPG). The span at 778–787 (GTPGRGGLDG) shows a compositional bias: gly residues. The Cell attachment site motif lies at 830–832 (RGD). The span at 861–876 (CPGEMGPPGQKGYPGA) shows a compositional bias: low complexity. A compositionally biased stretch (basic and acidic residues) spans 922 to 939 (KGEKGRPGAKGERGEKGK). Residues 970 to 985 (RGNPGLPGPKGLEGLP) show a composition bias toward low complexity. The Cell attachment site signature appears at 994-996 (RGD). The span at 1092-1103 (SGPAGPDGAPGS) shows a compositional bias: low complexity. Over residues 1128–1146 (PGPPGSTGPPGPPGLPGLP) the composition is skewed to pro residues. A Cell attachment site motif is present at residues 1152–1154 (RGD). Residues 1228 to 1248 (PGAIIPGPKGDRGLPGLRGNP) show a composition bias toward low complexity. Pro residues predominate over residues 1250–1259 (EPGPPGPPGP). Positions 1304-1306 (RGD) match the Cell attachment site motif. Residues 1333–1343 (PVGPKGPPGPR) show a composition bias toward pro residues. 2 stretches are compositionally biased toward low complexity: residues 1366-1379 (QPGMKGDPGPLGLP) and 1402-1429 (PAGTKGNKGLKGQQGPPGLDGLPGLKGN). The interval 1425–1443 (GLKGNPGDRGTPATGTRMR) is epitope recognized by Goodpasture antibodies. One can recognise a Collagen IV NC1 domain in the interval 1444-1668 (GFIFTRHSQT…SRCQVCMKKR (225 aa)). Cystine bridges form between cysteine 1459-cysteine 1550, cysteine 1492-cysteine 1547, cysteine 1504-cysteine 1510, cysteine 1569-cysteine 1664, cysteine 1603-cysteine 1661, and cysteine 1615-cysteine 1621. Residues 1478-1556 (NKRAHGQDLG…CTVCEGPAMA (79 aa)) are required for the anti-angiogenic activity of tumstatin. An S-Lysyl-methionine sulfilimine (Met-Lys) (interchain with K-1650) cross-link involves residue methionine 1532. The segment at 1609–1627 (ASPFIECHGRGTCNYYSNS) is required for the anti-tumor cell activity of tumstatin. Lysine 1650 participates in a covalent cross-link: S-Lysyl-methionine sulfilimine (Lys-Met) (interchain with M-1532).

This sequence belongs to the type IV collagen family. There are six type IV collagen isoforms, alpha 1(IV)-alpha 6(IV), each of which can form a triple helix structure with 2 other chains to generate type IV collagen network. The alpha 3(IV) chain forms a triple helical protomer with alpha 4(IV) and alpha 5(IV); this triple helical structure dimerizes through NC1-NC1 domain interactions such that the alpha 3(IV), alpha 4(IV) and alpha 5(IV) chains of one protomer connect with the alpha 5(IV), alpha 4(IV) and alpha 3(IV) chains of the opposite promoter, respectively. Interacts with ITGB3. Associates with LAMB2 at the neuromuscular junction and in GBM. Post-translationally, prolines at the third position of the tripeptide repeating unit (G-X-Y) are hydroxylated in some or all of the chains. Type IV collagens contain numerous cysteine residues which are involved in inter- and intramolecular disulfide bonding. 12 of these, located in the NC1 domain, are conserved in all known type IV collagens. In terms of processing, the trimeric structure of the NC1 domains is stabilized by covalent bonds between Lys and Met residues. Post-translationally, phosphorylated. Thought to be phosphorylated by CERT, but CERT does not have kinase activity. As to expression, highly expressed in kidney and lung. Detected at lower levels in heart, muscle and skin.

It localises to the secreted. It is found in the extracellular space. The protein resides in the extracellular matrix. Its subcellular location is the basement membrane. Type IV collagen is the major structural component of glomerular basement membranes (GBM), forming a 'chicken-wire' meshwork together with laminins, proteoglycans and entactin/nidogen. Its function is as follows. Tumstatin, a cleavage fragment corresponding to the collagen alpha 3(IV) NC1 domain, possesses both anti-angiogenic and anti-tumor cell activity; these two anti-tumor properties may be regulated via RGD-independent ITGB3-mediated mechanisms. This chain is Collagen alpha-3(IV) chain, found in Mus musculus (Mouse).